Reading from the N-terminus, the 662-residue chain is Probable protein phosphatase 2C 4 (662 aa).

A Phosphoserine modification is found at Ser-153. The PPM-type phosphatase domain occupies 249-653; it reads DVSLENQNLQ…DDVSIVVISL (405 aa). Mn(2+) contacts are provided by Asp-286, Gly-287, Asp-581, and Asp-644.

Belongs to the PP2C family. Mg(2+) serves as cofactor. Requires Mn(2+) as cofactor. Expressed in seedlings, roots, leaves, stems, young inflorescences, flowers and siliques.

Its subcellular location is the nucleus. The catalysed reaction is O-phospho-L-seryl-[protein] + H2O = L-seryl-[protein] + phosphate. It catalyses the reaction O-phospho-L-threonyl-[protein] + H2O = L-threonyl-[protein] + phosphate. Involved in leaf development regulation. This Arabidopsis thaliana (Mouse-ear cress) protein is Probable protein phosphatase 2C 4 (PLL5).